Here is a 160-residue protein sequence, read N- to C-terminus: Phosphopantetheine adenylyltransferase (160 aa).

Ser-8 is a binding site for substrate. ATP contacts are provided by residues 8–9 and His-16; that span reads SF. Residues Lys-40, Thr-72, and Arg-86 each coordinate substrate. Residues 87-89, Glu-97, and 122-128 contribute to the ATP site; these read GLR and YSFLSSS.

This sequence belongs to the bacterial CoaD family. In terms of assembly, homohexamer. It depends on Mg(2+) as a cofactor.

The protein localises to the cytoplasm. The catalysed reaction is (R)-4'-phosphopantetheine + ATP + H(+) = 3'-dephospho-CoA + diphosphate. Its pathway is cofactor biosynthesis; coenzyme A biosynthesis; CoA from (R)-pantothenate: step 4/5. In terms of biological role, reversibly transfers an adenylyl group from ATP to 4'-phosphopantetheine, yielding dephospho-CoA (dPCoA) and pyrophosphate. The protein is Phosphopantetheine adenylyltransferase of Synechococcus sp. (strain CC9311).